The chain runs to 295 residues: Alpha-soluble NSF attachment protein (295 aa).

At methionine 1 the chain carries N-acetylmethionine. Residues serine 26, serine 29, and serine 195 each carry the phosphoserine modification.

Belongs to the SNAP family. In terms of assembly, interacts with PRKCABP, and disrupts the interaction between GRIA2 and PRKCABP, leading to the internalization of GRIA2. Found in a complex with VAMP8. Component of a SNARE-like complex that contains at least ZW10, USE1L, RINT1, STX18 and NAPA/SNAP-alpha. Interacts with VTI1A. Interacts with STX12. Interacts with GNA12 (via N-terminus); the interaction promotes CDH5 localization to plasma membrane.

The protein localises to the cell membrane. Functionally, required for vesicular transport between the endoplasmic reticulum and the Golgi apparatus. Together with GNA12 promotes CDH5 localization to plasma membrane. This Homo sapiens (Human) protein is Alpha-soluble NSF attachment protein (NAPA).